Here is a 277-residue protein sequence, read N- to C-terminus: Acetyl-coenzyme A carboxylase carboxyl transferase subunit beta (277 aa).

One can recognise a CoA carboxyltransferase N-terminal domain in the interval 25–277; that stretch reads LVRRCPVCHT…DLLRLHKGES (253 aa). Cysteine 29, cysteine 32, cysteine 47, and cysteine 50 together coordinate Zn(2+). The segment at 29–50 adopts a C4-type zinc-finger fold; it reads CPVCHTTFLTDHWEPTRLCPAC.

This sequence belongs to the AccD/PCCB family. In terms of assembly, acetyl-CoA carboxylase is a heterohexamer composed of biotin carboxyl carrier protein (AccB), biotin carboxylase (AccC) and two subunits each of ACCase subunit alpha (AccA) and ACCase subunit beta (AccD). The cofactor is Zn(2+).

It localises to the cytoplasm. It carries out the reaction N(6)-carboxybiotinyl-L-lysyl-[protein] + acetyl-CoA = N(6)-biotinyl-L-lysyl-[protein] + malonyl-CoA. Its pathway is lipid metabolism; malonyl-CoA biosynthesis; malonyl-CoA from acetyl-CoA: step 1/1. Component of the acetyl coenzyme A carboxylase (ACC) complex. Biotin carboxylase (BC) catalyzes the carboxylation of biotin on its carrier protein (BCCP) and then the CO(2) group is transferred by the transcarboxylase to acetyl-CoA to form malonyl-CoA. The chain is Acetyl-coenzyme A carboxylase carboxyl transferase subunit beta from Levilactobacillus brevis (strain ATCC 367 / BCRC 12310 / CIP 105137 / JCM 1170 / LMG 11437 / NCIMB 947 / NCTC 947) (Lactobacillus brevis).